The chain runs to 1045 residues: Isoleucine--tRNA ligase (1045 aa).

Residues Pro-49 to Thr-59 carry the 'HIGH' region motif. Positions Lys-591 to Ser-595 match the 'KMSKS' region motif. Position 594 (Lys-594) interacts with ATP.

Belongs to the class-I aminoacyl-tRNA synthetase family. IleS type 2 subfamily. Monomer. Requires Zn(2+) as cofactor.

The protein resides in the cytoplasm. The catalysed reaction is tRNA(Ile) + L-isoleucine + ATP = L-isoleucyl-tRNA(Ile) + AMP + diphosphate. Its function is as follows. Catalyzes the attachment of isoleucine to tRNA(Ile). As IleRS can inadvertently accommodate and process structurally similar amino acids such as valine, to avoid such errors it has two additional distinct tRNA(Ile)-dependent editing activities. One activity is designated as 'pretransfer' editing and involves the hydrolysis of activated Val-AMP. The other activity is designated 'posttransfer' editing and involves deacylation of mischarged Val-tRNA(Ile). This chain is Isoleucine--tRNA ligase, found in Methanothermobacter marburgensis (strain ATCC BAA-927 / DSM 2133 / JCM 14651 / NBRC 100331 / OCM 82 / Marburg) (Methanobacterium thermoautotrophicum).